The primary structure comprises 240 residues: Enolase-phosphatase E1 (240 aa).

Belongs to the HAD-like hydrolase superfamily. MasA/MtnC family. In terms of assembly, monomer. The cofactor is Mg(2+).

The catalysed reaction is 5-methylsulfanyl-2,3-dioxopentyl phosphate + H2O = 1,2-dihydroxy-5-(methylsulfanyl)pent-1-en-3-one + phosphate. The protein operates within amino-acid biosynthesis; L-methionine biosynthesis via salvage pathway; L-methionine from S-methyl-5-thio-alpha-D-ribose 1-phosphate: step 3/6. It participates in amino-acid biosynthesis; L-methionine biosynthesis via salvage pathway; L-methionine from S-methyl-5-thio-alpha-D-ribose 1-phosphate: step 4/6. Bifunctional enzyme that catalyzes the enolization of 2,3-diketo-5-methylthiopentyl-1-phosphate (DK-MTP-1-P) into the intermediate 2-hydroxy-3-keto-5-methylthiopentenyl-1-phosphate (HK-MTPenyl-1-P), which is then dephosphorylated to form the acireductone 1,2-dihydroxy-3-keto-5-methylthiopentene (DHK-MTPene). The sequence is that of Enolase-phosphatase E1 from Saccharopolyspora erythraea (strain ATCC 11635 / DSM 40517 / JCM 4748 / NBRC 13426 / NCIMB 8594 / NRRL 2338).